Here is a 201-residue protein sequence, read N- to C-terminus: Imidazole glycerol phosphate synthase subunit HisH (201 aa).

The region spanning 1–201 is the Glutamine amidotransferase type-1 domain; sequence MVFIADYGAG…LQVLRNFAEC (201 aa). The active-site Nucleophile is C79. Catalysis depends on residues H183 and E185.

As to quaternary structure, heterodimer of HisH and HisF.

Its subcellular location is the cytoplasm. The catalysed reaction is 5-[(5-phospho-1-deoxy-D-ribulos-1-ylimino)methylamino]-1-(5-phospho-beta-D-ribosyl)imidazole-4-carboxamide + L-glutamine = D-erythro-1-(imidazol-4-yl)glycerol 3-phosphate + 5-amino-1-(5-phospho-beta-D-ribosyl)imidazole-4-carboxamide + L-glutamate + H(+). It carries out the reaction L-glutamine + H2O = L-glutamate + NH4(+). Its pathway is amino-acid biosynthesis; L-histidine biosynthesis; L-histidine from 5-phospho-alpha-D-ribose 1-diphosphate: step 5/9. Functionally, IGPS catalyzes the conversion of PRFAR and glutamine to IGP, AICAR and glutamate. The HisH subunit catalyzes the hydrolysis of glutamine to glutamate and ammonia as part of the synthesis of IGP and AICAR. The resulting ammonia molecule is channeled to the active site of HisF. In Chlorobium luteolum (strain DSM 273 / BCRC 81028 / 2530) (Pelodictyon luteolum), this protein is Imidazole glycerol phosphate synthase subunit HisH.